We begin with the raw amino-acid sequence, 956 residues long: Calsyntenin-3 (956 aa).

A signal peptide spans 1-19 (MTLLLVSLLLASLLQISSG). Over 1 to 21 (MTLLLVSLLLASLLQISSGNK) the chain is Cytoplasmic. The Extracellular segment spans residues 20–847 (NKANKHKPWI…SHRNSMVPSA (828 aa)). Residues 22-42 (ANKHKPWIEAEYQGIVMENDN) constitute an intramembrane region (helical). Cadherin domains are found at residues 29 to 145 (IEAE…APVF) and 146 to 246 (VERL…KPSW). At 43–73 (TVLLNPPLFALDKDAPLRYAGEICGFRLHGS) the chain is on the cytoplasmic side. An intramembrane region (helical) is located at residues 74 to 94 (GVPFEAVILDKATGEGLIRAK). Residues 95–139 (EPVDCEAQKEHTFTIQAYDCGEGPDGTNTKKSHKATVHVRVNDVN) are Cytoplasmic-facing. The helical intramembrane region spans 140–160 (EFAPVFVERLYRAAVTEGKLY). At 161-248 (DRILRVEAID…KPTCKPSWQG (88 aa)) the chain is on the cytoplasmic side. A helical transmembrane segment spans residues 249-269 (WNKRIEYAPGAGSLALFPGIR). Topologically, residues 270–357 (LETCDEPLWN…GTQAVQVPLG (88 aa)) are lumenal. N-linked (GlcNAc...) asparagine glycosylation is found at asparagine 299, asparagine 327, asparagine 347, asparagine 507, and asparagine 740. A helical membrane pass occupies residues 848-868 (ATLIIVVCVGFLVLMVILGLV). The Cytoplasmic segment spans residues 869–956 (RIHSLHRRVS…RIIESPPHRY (88 aa)). The interval 916 to 956 (QTCVAGVAGGQQEEEDSSDSEAADSPSSDERRIIESPPHRY) is disordered. A compositionally biased stretch (acidic residues) spans 927 to 937 (QEEEDSSDSEA). A compositionally biased stretch (basic and acidic residues) spans 943 to 956 (SDERRIIESPPHRY).

Belongs to the calsyntenin family. Interacts (via cadherin domains) with both alpha and beta isoforms of neurexins (NRXN1, NRXN2 and NRXN3). Directly interacts with APBA2. Forms a tripartite complex with APBA2 and APP. Interacts with low affinity with KLC1. Interacts with SLC23A2/SVCT2. As to quaternary structure, interacts with CIDEA; inhibiting the lipid transferase activity of CIDEA. Interacts with CIDEC; inhibiting the lipid transferase activity of CIDEC. In terms of processing, proteolytically processed under normal cellular conditions. A primary zeta-cleavage generates a large extracellular (soluble) N-terminal domain (sAlc) and a short C-terminal transmembrane fragment (CTF1). A secondary cleavage catalyzed by gamma-secretase within the transmembrane domain releases the beta-Alc-beta chain in the extracellular milieu and produces an intracellular fragment (AlcICD). This processing is strongly suppressed in the tripartite complex formed with APBA2 and APP, which seems to prevent the association with gamma-secretase. Post-translationally, ubiquitinated: endoplasmic reticulum-localized protein is ubiquitinated and degraded by the endoplasmic reticulum-associated degradation (ERAD) pathway. Restricted to the brain (at protein level). In the cerebral cortex, found in the somas and neuropil of all layers. Expressed at highest levels in neurons of cortical layer 5 and, at lower levels, in neurons of the upper layers. Highly expressed in Purkinje cells. Also found in a few scattered interneurons throughout the granule cell layer and occasionally in neurons in the molecular layer (at protein level). In all layers, high levels in a subpopulation of presumptive GABAergic neurons (based on morphology). As to expression, expression is restricted to adipose tissue, with high expression in thermogenic adipocytes (brown adipose tissue).

The protein localises to the postsynaptic cell membrane. It localises to the endoplasmic reticulum membrane. Its subcellular location is the golgi apparatus membrane. It is found in the cell projection. The protein resides in the dendrite. The protein localises to the lipid droplet. Postsynaptic adhesion molecule that binds to presynaptic neurexins to mediate both excitatory and inhibitory synapse formation. Promotes synapse development by acting as a cell adhesion molecule at the postsynaptic membrane, which associates with both neurexin-alpha and neurexin-beta proteins at the presynaptic membrane. Regulates the balance between excitatory and inhibitory synapses by inhibiting formation of excitatory parallel-fiber synapses and promoting formation of inhibitory synapses in the same neuron. May also be involved in ascorbate (vitamin C) uptake via its interaction with SLC23A2/SVCT2. Complex formation with APBA2 and APP, stabilizes APP metabolism and enhances APBA2-mediated suppression of beta-APP40 secretion, due to the retardation of intracellular APP maturation. In terms of biological role, adipose-specific isoform that plays a key role in adaptive thermogenesis. Facilitates the efficient use of stored triglyceride by promoting multilocular morphology of thermogenic adipocytes: acts by inhibiting the activity of CIDEA and CIDEC on lipid droplets, thereby preventing lipid droplet fusion and facilitating lipid utilization. May also participate in adaptive thermogenesis by promoting sympathetic innervation of thermogenic adipose tissue: acts by driving secretion of neurotrophic factor S100B from brown adipocytes, stimulating neurite outgrowth from sympathetic neurons. This is Calsyntenin-3 from Mus musculus (Mouse).